A 673-amino-acid polypeptide reads, in one-letter code: UvrABC system protein B (673 aa).

The Helicase ATP-binding domain maps to 26 to 414; sequence EGLEDGLAHQ…GDEVVDQVVR (389 aa). 39–46 provides a ligand contact to ATP; that stretch reads GVTGSGKT. Residues 92–115 carry the Beta-hairpin motif; the sequence is YYDYYQPEAYVPSSDTFIEKDASV. Positions 431 to 597 constitute a Helicase C-terminal domain; the sequence is QVDDLLSEIR…GLNKKVVDIL (167 aa). In terms of domain architecture, UVR spans 633–668; the sequence is QQKIHELEEQMMQHAQNLEFEEAAQIRDQLHQLREL.

This sequence belongs to the UvrB family. Forms a heterotetramer with UvrA during the search for lesions. Interacts with UvrC in an incision complex.

It is found in the cytoplasm. The UvrABC repair system catalyzes the recognition and processing of DNA lesions. A damage recognition complex composed of 2 UvrA and 2 UvrB subunits scans DNA for abnormalities. Upon binding of the UvrA(2)B(2) complex to a putative damaged site, the DNA wraps around one UvrB monomer. DNA wrap is dependent on ATP binding by UvrB and probably causes local melting of the DNA helix, facilitating insertion of UvrB beta-hairpin between the DNA strands. Then UvrB probes one DNA strand for the presence of a lesion. If a lesion is found the UvrA subunits dissociate and the UvrB-DNA preincision complex is formed. This complex is subsequently bound by UvrC and the second UvrB is released. If no lesion is found, the DNA wraps around the other UvrB subunit that will check the other stand for damage. The sequence is that of UvrABC system protein B from Salmonella typhi.